The primary structure comprises 67 residues: DNA-directed RNA polymerase subunit omega (67 aa).

Belongs to the RNA polymerase subunit omega family. As to quaternary structure, the RNAP catalytic core consists of 2 alpha, 1 beta, 1 beta' and 1 omega subunit. When a sigma factor is associated with the core the holoenzyme is formed, which can initiate transcription.

The catalysed reaction is RNA(n) + a ribonucleoside 5'-triphosphate = RNA(n+1) + diphosphate. Functionally, promotes RNA polymerase assembly. Latches the N- and C-terminal regions of the beta' subunit thereby facilitating its interaction with the beta and alpha subunits. This is DNA-directed RNA polymerase subunit omega from Cupriavidus metallidurans (strain ATCC 43123 / DSM 2839 / NBRC 102507 / CH34) (Ralstonia metallidurans).